Reading from the N-terminus, the 323-residue chain is Transcription factor JunD (323 aa).

Disordered stretches follow at residues 138 to 173 (QNQL…APGL) and 197 to 221 (PFAA…QIVP). Positions 141–167 (LGGGGGPNGGAAAAGGGGGGGGGGGGE) are enriched in gly residues. The segment covering 198–212 (FAAPPPRLPPPPPPP) has biased composition (pro residues). Residues 242-269 (RIKAERKRLRNRIAASKCRKRKLERISR) form a basic motif region. A bZIP domain is found at 242-305 (RIKAERKRLR…AQLKQKVLSH (64 aa)). The interval 270–298 (LEEKVKSLKSQNTELASTASLLREQVAQL) is leucine-zipper.

The protein belongs to the bZIP family. Jun subfamily. As to quaternary structure, binds DNA as a dimer.

The protein localises to the nucleus. This chain is Transcription factor JunD (JUND), found in Gallus gallus (Chicken).